Reading from the N-terminus, the 275-residue chain is Autophagy protein 5 (275 aa).

Residue methionine 1 is modified to N-acetylmethionine. Lysine 130 participates in a covalent cross-link: Glycyl lysine isopeptide (Lys-Gly) (interchain with G-Cter in ATG12).

This sequence belongs to the ATG5 family. In terms of assembly, forms a conjugate with ATG12. Part of the minor complex composed of 4 sets of ATG12-ATG5 and ATG16L1 (400 kDa); this complex interacts with ATG3 leading to disruption of ATG7 interaction and promotion of ATG8-like proteins lipidation. Forms an 800-kDa complex composed of ATG12-ATG5 and ATG16L2. The ATG12-ATG5 conjugate interacts with RAB33A; this interaction is bridged by ATG16L1 and promotes ATG12-ATG5-ATG16L1 complex recruitment to phagophores. Interacts with TECPR1; the interaction is direct and does not take place when ATG16L1 is associated with the ATG5-ATG12 conjugate. Interacts with DHX58/RIG-1, IFIH1/MDA5 and MAVS/IPS-1 in monomeric form as well as in ATG12-ATG5 conjugate form. The interaction with MAVS is further enhanced upon vesicular stomatitis virus (VSV) infection. Interacts with ATG3. Interacts with ATG7 and ATG10. Interacts with FADD. Interacts with Bassoon/BSN; this interaction is important for the regulation of presynaptic autophagy. Interacts with ATG16L2. Conjugated to ATG12; which is essential for autophagy, but is not required for association with isolation membrane. Post-translationally, acetylated by EP300.

Its subcellular location is the cytoplasm. The protein resides in the preautophagosomal structure membrane. Involved in autophagic vesicle formation. Conjugation with ATG12, through a ubiquitin-like conjugating system involving ATG7 as an E1-like activating enzyme and ATG10 as an E2-like conjugating enzyme, is essential for its function. The ATG12-ATG5 conjugate acts as an E3-like enzyme which is required for lipidation of ATG8 family proteins and their association to the vesicle membranes. Involved in mitochondrial quality control after oxidative damage, and in subsequent cellular longevity. Plays a critical role in multiple aspects of lymphocyte development and is essential for both B and T lymphocyte survival and proliferation. Required for optimal processing and presentation of antigens for MHC II. Involved in the maintenance of axon morphology and membrane structures, as well as in normal adipocyte differentiation. Promotes primary ciliogenesis through removal of OFD1 from centriolar satellites and degradation of IFT20 via the autophagic pathway. As part of the ATG8 conjugation system with ATG12 and ATG16L1, required for recruitment of LRRK2 to stressed lysosomes and induction of LRRK2 kinase activity in response to lysosomal stress. In terms of biological role, may play an important role in the apoptotic process, possibly within the modified cytoskeleton. Its expression is a relatively late event in the apoptotic process, occurring downstream of caspase activity. Plays a crucial role in IFN-gamma-induced autophagic cell death by interacting with FADD. This chain is Autophagy protein 5, found in Bos taurus (Bovine).